A 324-amino-acid polypeptide reads, in one-letter code: Fibronectin type III domain-containing protein 8 (324 aa).

The Fibronectin type-III domain maps to 179–280 (PDTPFIFEHT…KPYKFATLAT (102 aa)).

The chain is Fibronectin type III domain-containing protein 8 (FNDC8) from Homo sapiens (Human).